The sequence spans 97 residues: Large ribosomal subunit protein uL23 (97 aa).

Belongs to the universal ribosomal protein uL23 family. In terms of assembly, part of the 50S ribosomal subunit. Contacts protein L29, and trigger factor when it is bound to the ribosome.

In terms of biological role, one of the early assembly proteins it binds 23S rRNA. One of the proteins that surrounds the polypeptide exit tunnel on the outside of the ribosome. Forms the main docking site for trigger factor binding to the ribosome. This Anaeromyxobacter dehalogenans (strain 2CP-1 / ATCC BAA-258) protein is Large ribosomal subunit protein uL23.